Here is a 344-residue protein sequence, read N- to C-terminus: Lipase chaperone (344 aa).

Residues 14–34 (VAVYGAVGLAAIAGVAIWSGA) form a helical membrane-spanning segment.

It belongs to the lipase chaperone family.

It localises to the cell inner membrane. May be involved in the folding of the extracellular lipase during its passage through the periplasm. The polypeptide is Lipase chaperone (Burkholderia ambifaria (strain MC40-6)).